The sequence spans 196 residues: Phosphoheptose isomerase (196 aa).

The 160-residue stretch at 35–194 (LTACLRCGGK…EKELFTPSGQ (160 aa)) folds into the SIS domain. 50–52 (NGG) provides a ligand contact to substrate. 2 residues coordinate Zn(2+): histidine 59 and glutamate 63. Residues glutamate 63, 92 to 93 (ND), 118 to 120 (STS), serine 123, and glutamine 170 each bind substrate. Zn(2+) is bound by residues glutamine 170 and histidine 178.

This sequence belongs to the SIS family. GmhA subfamily. In terms of assembly, homotetramer. It depends on Zn(2+) as a cofactor.

It localises to the cytoplasm. The catalysed reaction is 2 D-sedoheptulose 7-phosphate = D-glycero-alpha-D-manno-heptose 7-phosphate + D-glycero-beta-D-manno-heptose 7-phosphate. The protein operates within carbohydrate biosynthesis; D-glycero-D-manno-heptose 7-phosphate biosynthesis; D-glycero-alpha-D-manno-heptose 7-phosphate and D-glycero-beta-D-manno-heptose 7-phosphate from sedoheptulose 7-phosphate: step 1/1. Its function is as follows. Catalyzes the isomerization of sedoheptulose 7-phosphate in D-glycero-D-manno-heptose 7-phosphate. The sequence is that of Phosphoheptose isomerase from Syntrophotalea carbinolica (strain DSM 2380 / NBRC 103641 / GraBd1) (Pelobacter carbinolicus).